The sequence spans 64 residues: Large ribosomal subunit protein bL35 (64 aa).

Composition is skewed to basic residues over residues 1-15 (MPKA…KRFR) and 23-42 (VRQK…KRTR). The tract at residues 1-45 (MPKAKTHSGASKRFRTTGSGKVVRQKANRRHLLEHKPTKRTRRLD) is disordered.

The protein belongs to the bacterial ribosomal protein bL35 family.

The chain is Large ribosomal subunit protein bL35 from Mycolicibacterium vanbaalenii (strain DSM 7251 / JCM 13017 / BCRC 16820 / KCTC 9966 / NRRL B-24157 / PYR-1) (Mycobacterium vanbaalenii).